We begin with the raw amino-acid sequence, 278 residues long: Proline-rich 28 kDa antigen homolog (278 aa).

Positions 1 to 28 are cleaved as a signal peptide; that stretch reads MIQSTQTWRVLAGGLAATAMGVTVFAGG.

To M.tuberculosis Rv0040c.

The sequence is that of Proline-rich 28 kDa antigen homolog from Mycobacterium leprae (strain TN).